A 602-amino-acid chain; its full sequence is Laccase 1 (602 aa).

An N-terminal signal peptide occupies residues 1–20; that stretch reads MDHFARVSLVAALLYTNTWA. Plastocyanin-like domains follow at residues 30 to 128 and 157 to 345; these read TWEE…VRPK and YLVV…RIPN. Residues H78, H80, H108, and H110 each coordinate Cu cation. 7 N-linked (GlcNAc...) asparagine glycosylation sites follow: N176, N241, N264, N388, N430, N454, and N470. The Plastocyanin-like 3 domain occupies 461 to 584; sequence NEGLLLRTRN…GGMGMVIMDG (124 aa). 3 residues coordinate Cu cation: H492, H495, and H497. Residue N512 is glycosylated (N-linked (GlcNAc...) asparagine). H566, C567, H568, and H572 together coordinate Cu cation.

The protein belongs to the multicopper oxidase family. The cofactor is Cu cation.

Its subcellular location is the cell surface. It participates in pigment biosynthesis. Its function is as follows. Laccase; part of the Pks1 gene cluster that mediates the biosynthesis of an anthraquinone derivative pigment that contributes to conidial pigmentation that provides protection from UV radiation, heat and cold stress. The polyketide synthase Pks1 produces 1-acetyl-2,4,6,8-tetrahydroxy-9,10-anthraquinone though condensation of acetyl-CoA with malonyl-CoA. The dehydratase EthD and the laccase Mlac1 further convert the anthraquinone derivative into the final conidial pigment. This Metarhizium album (strain ARSEF 1941) protein is Laccase 1.